The sequence spans 373 residues: Sodium-dependent organic anion transporter (373 aa).

Residues 1–15 (MSTDCAGNSTCPVNS) are compositionally biased toward polar residues. The segment at 1-21 (MSTDCAGNSTCPVNSTEEDPP) is disordered. Topologically, residues 1–32 (MSTDCAGNSTCPVNSTEEDPPVGMEGHANLKL) are extracellular. Residues N8 and N14 are each glycosylated (N-linked (GlcNAc...) asparagine). The chain crosses the membrane as a helical span at residues 33–53 (LFTVLSAVMVGLVMFSFGCSV). The Cytoplasmic portion of the chain corresponds to 54 to 67 (ESQKLWLHLRRPWG). Residues 68–88 (IAVGLLSQFGLMPLTAYLLAI) traverse the membrane as a helical segment. Topologically, residues 89–97 (GFGLKPFQA) are extracellular. Residues 98 to 118 (IAVLMMGSCPGGTISNVLTFW) traverse the membrane as a helical segment. The Cytoplasmic segment spans residues 119 to 126 (VDGDMDLS). A helical transmembrane segment spans residues 127 to 147 (ISMTTCSTVAALGMMPLCLYI). Residues 148–157 (YTRSWTLTQN) lie on the Extracellular side of the membrane. Residues 158–178 (LVIPYQSIGITLVSLVVPVAS) traverse the membrane as a helical segment. The Cytoplasmic segment spans residues 179–195 (GVYVNYRWPKQATVILK). Residues 196–216 (VGAILGGMLLLVVAVTGMVLA) form a helical membrane-spanning segment. The Extracellular segment spans residues 217 to 224 (KGWNTDVT). Residues 225–245 (LLVISCIFPLVGHVTGFLLAF) traverse the membrane as a helical segment. The Cytoplasmic segment spans residues 246 to 265 (LTHQSWQRCRTISIETGAQN). A helical membrane pass occupies residues 266–283 (IQLCIAMLQLSFSAEYLV). Residue Q284 is a topological domain, extracellular. Residues 285-305 (LLNFALAYGLFQVLHGLLIVA) traverse the membrane as a helical segment. Over 306 to 373 (AYQAYKRRQK…ELTSHIPSCE (68 aa)) the chain is Cytoplasmic.

The protein belongs to the bile acid:sodium symporter (BASS) (TC 2.A.28) family. Glycosylated. As to expression, highest expression in lung and testis, moderate expression in heart, bladder and skin, and low expression in blood, liver, stomach, small intestine, spleen, kidney, adrenal gland, seminal vesicle, preputial gland, coagulating gland, lacrimal gland/eye, and brain.

The protein resides in the membrane. It catalyses the reaction estrone 3-sulfate(out) + 2 Na(+)(out) = estrone 3-sulfate(in) + 2 Na(+)(in). The catalysed reaction is 17beta-estradiol 3-sulfate(out) + 2 Na(+)(out) = 17beta-estradiol 3-sulfate(in) + 2 Na(+)(in). It carries out the reaction dehydroepiandrosterone 3-sulfate(out) + 2 Na(+)(out) = dehydroepiandrosterone 3-sulfate(in) + 2 Na(+)(in). The enzyme catalyses androst-5-ene-diol 3-sulfate(out) + 2 Na(+)(out) = androst-5-ene-diol 3-sulfate(in) + 2 Na(+)(in). It catalyses the reaction pregnenolone sulfate(out) + 2 Na(+)(out) = pregnenolone sulfate(in) + 2 Na(+)(in). The catalysed reaction is taurolithocholate 3-sulfate(out) + 2 Na(+)(out) = taurolithocholate 3-sulfate(in) + 2 Na(+)(in). It carries out the reaction androsterone 3alpha-sulfate(out) + 2 Na(+)(out) = androsterone 3alpha-sulfate(in) + 2 Na(+)(in). The enzyme catalyses 5alpha-dihydrotestosterone sulfate(out) + 2 Na(+)(out) = 5alpha-dihydrotestosterone sulfate(in) + 2 Na(+)(in). It catalyses the reaction 17beta-estradiol 17-sulfate(out) + 2 Na(+)(out) = 17beta-estradiol 17-sulfate(in) + 2 Na(+)(in). The catalysed reaction is 17alpha-hydroxypregnenolone 3-sulfate(out) + 2 Na(+)(out) = 17alpha-hydroxypregnenolone 3-sulfate(in) + 2 Na(+)(in). It carries out the reaction epiandrosterone 3-sulfate(out) + 2 Na(+)(out) = epiandrosterone 3-sulfate(in) + 2 Na(+)(in). The enzyme catalyses epitestosterone 17-sulfate(out) + 2 Na(+)(out) = epitestosterone 17-sulfate(in) + 2 Na(+)(in). It catalyses the reaction testosterone 17-sulfate(out) + 2 Na(+)(out) = testosterone 17-sulfate(in) + 2 Na(+)(in). The catalysed reaction is 16alpha-hydroxydehydroepiandrosterone 3-sulfate(out) + 2 Na(+)(out) = 16alpha-hydroxydehydroepiandrosterone 3-sulfate(in) + 2 Na(+)(in). Its function is as follows. Transports sulfoconjugated steroid hormones from the extracellular compartment into the cytosol in a sodium-dependent manner without hydrolysis. Steroid sulfate hormones are commonly considered to be biologically inactive metabolites, that may be activated by steroid sulfatases into free steroids. May play an important role by delivering sulfoconjugated steroids to specific target cells in reproductive organs. May play a role transporting the estriol precursor 16alpha-hydroxydehydroepiandrosterone 3-sulfate (16a-OH-DHEAS) at the fetal blood vessel endothelium. Can also transport other sulfoconjugated molecules such as taurolithocholic acid-3-sulfate and sulfoconjugated pyrenes. The protein is Sodium-dependent organic anion transporter (Slc10a6) of Mus musculus (Mouse).